A 184-amino-acid polypeptide reads, in one-letter code: NADH-quinone oxidoreductase subunit B 1 (184 aa).

[4Fe-4S] cluster contacts are provided by C37, C38, C103, and C132.

The protein belongs to the complex I 20 kDa subunit family. NDH-1 is composed of 14 different subunits. Subunits NuoB, C, D, E, F, and G constitute the peripheral sector of the complex. [4Fe-4S] cluster is required as a cofactor.

It localises to the cell membrane. The catalysed reaction is a quinone + NADH + 5 H(+)(in) = a quinol + NAD(+) + 4 H(+)(out). Functionally, NDH-1 shuttles electrons from NADH, via FMN and iron-sulfur (Fe-S) centers, to quinones in the respiratory chain. The immediate electron acceptor for the enzyme in this species is believed to be a menaquinone. Couples the redox reaction to proton translocation (for every two electrons transferred, four hydrogen ions are translocated across the cytoplasmic membrane), and thus conserves the redox energy in a proton gradient. The sequence is that of NADH-quinone oxidoreductase subunit B 1 from Streptomyces griseus subsp. griseus (strain JCM 4626 / CBS 651.72 / NBRC 13350 / KCC S-0626 / ISP 5235).